We begin with the raw amino-acid sequence, 345 residues long: L-threonine 3-dehydrogenase (345 aa).

Cys42 contributes to the Zn(2+) binding site. Residues Thr44 and His47 each act as charge relay system in the active site. Zn(2+) is bound by residues His67, Glu68, Cys97, Cys100, Cys103, and Cys111. NAD(+)-binding positions include Ile179, Asp199, Arg204, 266–268 (LGI), and 290–291 (IY).

Belongs to the zinc-containing alcohol dehydrogenase family. As to quaternary structure, homotetramer. It depends on Zn(2+) as a cofactor.

It localises to the cytoplasm. It carries out the reaction L-threonine + NAD(+) = (2S)-2-amino-3-oxobutanoate + NADH + H(+). It functions in the pathway amino-acid degradation; L-threonine degradation via oxydo-reductase pathway; glycine from L-threonine: step 1/2. Functionally, catalyzes the NAD(+)-dependent oxidation of L-threonine to 2-amino-3-ketobutyrate. The protein is L-threonine 3-dehydrogenase of Rhizobium etli (strain ATCC 51251 / DSM 11541 / JCM 21823 / NBRC 15573 / CFN 42).